We begin with the raw amino-acid sequence, 250 residues long: Hydroxyacylglutathione hydrolase (250 aa).

Residues H52, H54, D56, H57, H107, D128, and H166 each coordinate Zn(2+).

It belongs to the metallo-beta-lactamase superfamily. Glyoxalase II family. Monomer. Requires Zn(2+) as cofactor.

It catalyses the reaction an S-(2-hydroxyacyl)glutathione + H2O = a 2-hydroxy carboxylate + glutathione + H(+). It functions in the pathway secondary metabolite metabolism; methylglyoxal degradation; (R)-lactate from methylglyoxal: step 2/2. Its function is as follows. Thiolesterase that catalyzes the hydrolysis of S-D-lactoyl-glutathione to form glutathione and D-lactic acid. The polypeptide is Hydroxyacylglutathione hydrolase (Neisseria gonorrhoeae (strain NCCP11945)).